The primary structure comprises 707 residues: Polyribonucleotide nucleotidyltransferase (707 aa).

Positions 486 and 492 each coordinate Mg(2+). The KH domain occupies 553–612 (PRIHKIKINPEKIKDVIGKGGSVIRMLTEETGTIIEIEDDGTIKISATIGEKAKNAIRRI). Residues 622 to 690 (GRIYSGKVTR…RQGRLRLSIK (69 aa)) form the S1 motif domain.

It belongs to the polyribonucleotide nucleotidyltransferase family. In terms of assembly, component of the RNA degradosome, which is a multiprotein complex involved in RNA processing and mRNA degradation. Mg(2+) is required as a cofactor.

It is found in the cytoplasm. The catalysed reaction is RNA(n+1) + phosphate = RNA(n) + a ribonucleoside 5'-diphosphate. Involved in mRNA degradation. Catalyzes the phosphorolysis of single-stranded polyribonucleotides processively in the 3'- to 5'-direction. In Buchnera aphidicola subsp. Schizaphis graminum (strain Sg), this protein is Polyribonucleotide nucleotidyltransferase.